The following is a 248-amino-acid chain: UPF0246 protein RF_0769 (248 aa).

This sequence belongs to the UPF0246 family.

This chain is UPF0246 protein RF_0769, found in Rickettsia felis (strain ATCC VR-1525 / URRWXCal2) (Rickettsia azadi).